Reading from the N-terminus, the 276-residue chain is Large ribosomal subunit protein uL2 (276 aa).

The segment at 213–264 (WLGRRPHNRGVVMNPVDHPHGGGEGRTSGGRHPVTPWGKPTKGYKTRTNKRT) is disordered.

The protein belongs to the universal ribosomal protein uL2 family. In terms of assembly, part of the 50S ribosomal subunit. Forms a bridge to the 30S subunit in the 70S ribosome.

Functionally, one of the primary rRNA binding proteins. Required for association of the 30S and 50S subunits to form the 70S ribosome, for tRNA binding and peptide bond formation. It has been suggested to have peptidyltransferase activity; this is somewhat controversial. Makes several contacts with the 16S rRNA in the 70S ribosome. This chain is Large ribosomal subunit protein uL2, found in Granulibacter bethesdensis (strain ATCC BAA-1260 / CGDNIH1).